A 142-amino-acid chain; its full sequence is Small ribosomal subunit protein bS6 (142 aa).

The segment covering 113 to 136 has biased composition (basic and acidic residues); the sequence is IKKEPREPREPRAPREPKAEKIEE. The interval 113–142 is disordered; it reads IKKEPREPREPRAPREPKAEKIEEQTFSEE.

The protein belongs to the bacterial ribosomal protein bS6 family.

Binds together with bS18 to 16S ribosomal RNA. The sequence is that of Small ribosomal subunit protein bS6 from Campylobacter curvus (strain 525.92).